The sequence spans 337 residues: Serpentine receptor class delta-18 (337 aa).

Helical transmembrane passes span I2 to L22, V90 to F110, L130 to A150, I187 to L207, A236 to L256, and S270 to V290.

It belongs to the nematode receptor-like protein srd family.

Its subcellular location is the membrane. The polypeptide is Serpentine receptor class delta-18 (srd-18) (Caenorhabditis elegans).